A 299-amino-acid chain; its full sequence is Cytosolic sulfotransferase 1 (299 aa).

51–56 (KAGTTW) is a 3'-phosphoadenylyl sulfate binding site. The active-site Proton acceptor is the His113. 3'-phosphoadenylyl sulfate-binding positions include Arg135, Ser143, Tyr199, 233-238 (VQFDAM), and 261-263 (RKG).

It belongs to the sulfotransferase 1 family. In terms of tissue distribution, expressed in liver.

Its subcellular location is the cytoplasm. Inhibited by Co(2+), Zn(2+), Cd(2+) and Pb(2+) ions. Inactivated by Hg(2+) and Cu(2+) ions. Functionally, sulfotransferase that utilizes 3'-phospho-5'-adenylyl sulfate (PAPS) as sulfonate donor to catalyze the sulfate conjugation of a variety of xenobiotic and endogenous compounds, including 2-naphthol, hydroxychlorobiphenyls, dopamine and T3 (triiodo-L-thyronine). The protein is Cytosolic sulfotransferase 1 of Danio rerio (Zebrafish).